Reading from the N-terminus, the 496-residue chain is L-arabinose isomerase (496 aa).

Mn(2+)-binding residues include E302, E329, H346, and H445.

The protein belongs to the arabinose isomerase family. It depends on Mn(2+) as a cofactor.

It carries out the reaction beta-L-arabinopyranose = L-ribulose. Its pathway is carbohydrate degradation; L-arabinose degradation via L-ribulose; D-xylulose 5-phosphate from L-arabinose (bacterial route): step 1/3. Functionally, catalyzes the conversion of L-arabinose to L-ribulose. The sequence is that of L-arabinose isomerase from Thermotoga petrophila (strain ATCC BAA-488 / DSM 13995 / JCM 10881 / RKU-1).